A 525-amino-acid chain; its full sequence is Probable feruloyl esterase B-1 (525 aa).

Residues 1-20 (MMRWFLLIGLASAAATDSSA) form the signal peptide. Disulfide bonds link cysteine 26–cysteine 75, cysteine 61–cysteine 114, cysteine 187–cysteine 442, cysteine 256–cysteine 273, cysteine 282–cysteine 292, and cysteine 502–cysteine 524. Asparagine 51, asparagine 80, and asparagine 98 each carry an N-linked (GlcNAc...) asparagine glycan. Serine 188 acts as the Acyl-ester intermediate in catalysis. Ca(2+)-binding residues include aspartate 257, aspartate 260, alanine 262, and aspartate 264. N-linked (GlcNAc...) asparagine glycosylation is found at asparagine 283, asparagine 288, and asparagine 351. Residues aspartate 401 and histidine 441 each act as charge relay system in the active site.

The protein belongs to the tannase family.

It localises to the secreted. The enzyme catalyses feruloyl-polysaccharide + H2O = ferulate + polysaccharide.. Its function is as follows. Involved in degradation of plant cell walls. Hydrolyzes the feruloyl-arabinose ester bond in arabinoxylans as well as the feruloyl-galactose and feruloyl-arabinose ester bonds in pectin. This chain is Probable feruloyl esterase B-1 (faeB-1), found in Neosartorya fischeri (strain ATCC 1020 / DSM 3700 / CBS 544.65 / FGSC A1164 / JCM 1740 / NRRL 181 / WB 181) (Aspergillus fischerianus).